The sequence spans 348 residues: Small ribosomal subunit biogenesis GTPase RsgA (348 aa).

Residues 1-14 (MAKRKLSKQQKWRI) are compositionally biased toward basic residues. Positions 1–39 (MAKRKLSKQQKWRIQKIQDERTKRATRKETQLESQLSGG) are disordered. Positions 16 to 31 (KIQDERTKRATRKETQ) are enriched in basic and acidic residues. One can recognise a CP-type G domain in the interval 116–275 (FGQLKPIAAN…LIDSPGIREF (160 aa)). Residues 163 to 166 (NKQD) and 217 to 225 (GQSGVGKSS) contribute to the GTP site. 4 residues coordinate Zn(2+): Cys-299, Cys-304, His-306, and Cys-312.

Belongs to the TRAFAC class YlqF/YawG GTPase family. RsgA subfamily. In terms of assembly, monomer. Associates with 30S ribosomal subunit, binds 16S rRNA. The cofactor is Zn(2+).

It is found in the cytoplasm. One of several proteins that assist in the late maturation steps of the functional core of the 30S ribosomal subunit. Helps release RbfA from mature subunits. May play a role in the assembly of ribosomal proteins into the subunit. Circularly permuted GTPase that catalyzes slow GTP hydrolysis, GTPase activity is stimulated by the 30S ribosomal subunit. In Hahella chejuensis (strain KCTC 2396), this protein is Small ribosomal subunit biogenesis GTPase RsgA.